The sequence spans 126 residues: Glycine cleavage system H protein (126 aa).

Residues 22–104 (TVTIGITEYA…YEKAWMVKVK (83 aa)) enclose the Lipoyl-binding domain. N6-lipoyllysine is present on Lys-63.

Belongs to the GcvH family. As to quaternary structure, the glycine cleavage system is composed of four proteins: P, T, L and H. (R)-lipoate is required as a cofactor.

In terms of biological role, the glycine cleavage system catalyzes the degradation of glycine. The H protein shuttles the methylamine group of glycine from the P protein to the T protein. Is also involved in protein lipoylation via its role as an octanoyl/lipoyl carrier protein intermediate. The chain is Glycine cleavage system H protein from Staphylococcus carnosus (strain TM300).